A 51-amino-acid chain; its full sequence is Ribosome biogenesis protein Nop10 (51 aa).

This sequence belongs to the NOP10 family.

Functionally, involved in ribosome biogenesis; more specifically in 18S rRNA pseudouridylation and in cleavage of pre-rRNA. This chain is Ribosome biogenesis protein Nop10, found in Methanococcus maripaludis (strain C6 / ATCC BAA-1332).